A 120-amino-acid chain; its full sequence is Large ribosomal subunit protein uL18 (120 aa).

This sequence belongs to the universal ribosomal protein uL18 family. In terms of assembly, part of the 50S ribosomal subunit; part of the 5S rRNA/L5/L18/L25 subcomplex. Contacts the 5S and 23S rRNAs.

In terms of biological role, this is one of the proteins that bind and probably mediate the attachment of the 5S RNA into the large ribosomal subunit, where it forms part of the central protuberance. This Rhizobium rhizogenes (strain K84 / ATCC BAA-868) (Agrobacterium radiobacter) protein is Large ribosomal subunit protein uL18.